Here is a 128-residue protein sequence, read N- to C-terminus: Small ribosomal subunit protein uS9 (128 aa).

Belongs to the universal ribosomal protein uS9 family.

In Christiangramia forsetii (strain DSM 17595 / CGMCC 1.15422 / KT0803) (Gramella forsetii), this protein is Small ribosomal subunit protein uS9.